The sequence spans 118 residues: Large ribosomal subunit protein bL20 (118 aa).

This sequence belongs to the bacterial ribosomal protein bL20 family.

Its function is as follows. Binds directly to 23S ribosomal RNA and is necessary for the in vitro assembly process of the 50S ribosomal subunit. It is not involved in the protein synthesizing functions of that subunit. The sequence is that of Large ribosomal subunit protein bL20 from Pseudomonas syringae pv. syringae (strain B728a).